The chain runs to 951 residues: Valine--tRNA ligase (951 aa).

Positions Pro-42–His-52 match the 'HIGH' region motif. The 'KMSKS' region signature appears at Lys-554–Ser-558. Lys-557 contacts ATP. A coiled-coil region spans residues Leu-882 to Gln-944.

It belongs to the class-I aminoacyl-tRNA synthetase family. ValS type 1 subfamily. In terms of assembly, monomer.

The protein localises to the cytoplasm. It catalyses the reaction tRNA(Val) + L-valine + ATP = L-valyl-tRNA(Val) + AMP + diphosphate. Catalyzes the attachment of valine to tRNA(Val). As ValRS can inadvertently accommodate and process structurally similar amino acids such as threonine, to avoid such errors, it has a 'posttransfer' editing activity that hydrolyzes mischarged Thr-tRNA(Val) in a tRNA-dependent manner. This chain is Valine--tRNA ligase, found in Salmonella choleraesuis (strain SC-B67).